The following is a 157-amino-acid chain: MSIEVNNESGVEVDEAGLVALSRYIFEQLYIHPQAELSILLVDEPAMEKLHIELMDEPGATDVLSVPMDDLTPGTPDRPTPQGMLGDIAICPQVAQVQAKNAGHALQDEMLLLTTHGILHLLGYDHAEPEEKEEMFGLQRELLTGFTGKEAPAETTQ.

Histidine 116, histidine 120, and histidine 126 together coordinate Zn(2+).

It belongs to the endoribonuclease YbeY family. Zn(2+) is required as a cofactor.

Its subcellular location is the cytoplasm. Single strand-specific metallo-endoribonuclease involved in late-stage 70S ribosome quality control and in maturation of the 3' terminus of the 16S rRNA. The chain is Endoribonuclease YbeY from Pseudarthrobacter chlorophenolicus (strain ATCC 700700 / DSM 12829 / CIP 107037 / JCM 12360 / KCTC 9906 / NCIMB 13794 / A6) (Arthrobacter chlorophenolicus).